A 172-amino-acid polypeptide reads, in one-letter code: Translationally-controlled tumor protein (172 aa).

Residues 1–172 form the TCTP domain; it reads MIIYRDLISH…FKDGLEMEKC (172 aa). S46 is modified (phosphoserine; by PLK1). S53 carries the post-translational modification Phosphoserine. S64 is subject to Phosphoserine; by PLK1. Positions 70–172 are required for reduction of TSC22D1 protein stability; that stretch reads VDIVMNHHLQ…FKDGLEMEKC (103 aa).

It belongs to the TCTP family. Homodimer. Interacts with STEAP3. Interacts with TSC22D1; interaction results in the destabilization of TSC22D1 protein.

It localises to the cytoplasm. In terms of biological role, involved in calcium binding and microtubule stabilization. Acts as a negative regulator of TSC22D1-mediated apoptosis, via interaction with and destabilization of TSC22D1 protein. This Bos taurus (Bovine) protein is Translationally-controlled tumor protein (TPT1).